Here is a 610-residue protein sequence, read N- to C-terminus: UvrABC system protein C (610 aa).

The 79-residue stretch at 16 to 94 (SQPGVYRMYD…IQRYQPRYNV (79 aa)) folds into the GIY-YIG domain. Residues 204-239 (SQVIEGLIKRMEEASQALRFEEAARIRDQIHAVRQV) enclose the UVR domain.

It belongs to the UvrC family. In terms of assembly, interacts with UvrB in an incision complex.

The protein localises to the cytoplasm. The UvrABC repair system catalyzes the recognition and processing of DNA lesions. UvrC both incises the 5' and 3' sides of the lesion. The N-terminal half is responsible for the 3' incision and the C-terminal half is responsible for the 5' incision. This Proteus mirabilis (strain HI4320) protein is UvrABC system protein C.